Here is a 142-residue protein sequence, read N- to C-terminus: Putative pre-16S rRNA nuclease (142 aa).

The protein belongs to the YqgF nuclease family.

The protein localises to the cytoplasm. Its function is as follows. Could be a nuclease involved in processing of the 5'-end of pre-16S rRNA. The protein is Putative pre-16S rRNA nuclease of Staphylococcus saprophyticus subsp. saprophyticus (strain ATCC 15305 / DSM 20229 / NCIMB 8711 / NCTC 7292 / S-41).